Here is a 96-residue protein sequence, read N- to C-terminus: uncharacterized protein (96 aa).

This is an uncharacterized protein from Escherichia coli O157:H7.